A 630-amino-acid polypeptide reads, in one-letter code: DELLA protein DWARF8 (630 aa).

Residues 1-35 (MKREYQDAGGSGGDMGSSKDKMMAAAAGAGEQEEE) are disordered. The short motif at 38 to 42 (DELLA) is the DELLA motif element. A disordered region spans residues 161-222 (PIPSPVAAPS…AAPPATQASA (62 aa)). 2 stretches are compositionally biased toward low complexity: residues 165–176 (PVAAPSADPSTD) and 191–222 (TSSSSSSSSSMDGGRTRSSVVEAAPPATQASA). A GRAS domain is found at 234–623 (VDTQEAGIRL…RPLIATSAWR (390 aa)). The interval 241-297 (IRLVHALLACAEAVQQENFSAAEALVKQIPMLASSQGGAMRKVAAYFGEALARRVYR) is leucine repeat I (LRI). Positions 248–252 (LACAE) match the LxCxE motif motif. Positions 316–381 (HAHFYESCPY…GGPPSFRLTG (66 aa)) are VHIID. The VHIID signature appears at 347–351 (VHVVD). The interval 395-427 (QVGWKLAQFAHTIRVDFQYRGLVAATLADLEPF) is leucine repeat II (LRII). Residues 443 to 544 (IAVNSVFELH…EVYLGRQICN (102 aa)) form a PFYRE region. An LXXLL motif motif is present at residues 451-455 (LHRLL). An SAW region spans residues 547 to 623 (ACEGAERTER…RPLIATSAWR (77 aa)).

Belongs to the GRAS family. DELLA subfamily. Post-translationally, phosphorylated. Ubiquitinated. Upon GA application it is ubiquitinated, leading to its subsequent degradation.

It is found in the nucleus. In terms of biological role, probable transcriptional regulator that acts as a repressor of the gibberellin (GA) signaling pathway. Probably acts by participating in large multiprotein complexes that repress transcription of GA-inducible genes. Upon GA application, it is degraded by the proteasome, allowing the GA signaling pathway. This is DELLA protein DWARF8 (D8) from Zea mays (Maize).